Consider the following 672-residue polypeptide: Putative per-hexamer repeat protein 5 (672 aa).

Gly residues-rich tracts occupy residues 141-161, 171-191, 215-233, 243-263, 273-295, 303-355, and 365-389; these read TGTGTGTGTGTGTGTGTGTGT, TDRGTGTGTGTGTGTGTGTGT, TGTGTGTGTGTGTGTGTDT, TDRGTGTGTGTGTGTGTGTGTGT, TGTG…GSGS, and TGTGTGTDTGTGTGTGTGTGTGSGS. 2 disordered regions span residues 141-193 and 213-672; these read TGTG…GTGT and TGTG…TGTA. Low complexity predominate over residues 390 to 424; that stretch reads GTAKVTGTATTTATVTETGTAKVTGTDTGTAKVTG. Gly residues predominate over residues 425–469; it reads TGTGTGTGTGTGTGTGTGTGTGTGTGTGTGTGTGTGTGTGTGSGS. The segment covering 470–486 has biased composition (low complexity); the sequence is GTAKVTGTDTGTAKVTG. Residues 487–537 show a composition bias toward gly residues; that stretch reads TGTGTGTGTGTGTGTGTGTGTGTGSGSGSGSGSGSGSGTGTGTGLGSGSGS. The span at 538-552 shows a compositional bias: low complexity; that stretch reads GTAKVTGTGTAKVTG. Gly residues predominate over residues 553 to 617; sequence TGTGTGTGTG…GTGTGTGTGT (65 aa). A compositionally biased stretch (low complexity) spans 618–636; it reads GTSTVTVRGTGTGTATATG. 2 stretches are compositionally biased toward gly residues: residues 637 to 653 and 663 to 672; these read TGTGTGTGTGTGTGTGT and RGTGTGTGTA.

In Mus musculus (Mouse), this protein is Putative per-hexamer repeat protein 5 (Phxr5).